We begin with the raw amino-acid sequence, 333 residues long: Dipeptide transport system permease protein DppB (333 aa).

A run of 6 helical transmembrane segments spans residues 9-29 (ILMV…LVHF), 103-123 (AFFA…IAAV), 136-156 (ASLT…ILYV), 197-217 (AVKS…AIIT), 256-276 (LIPV…GAVL), and 306-326 (VLII…LYGV). An ABC transmembrane type-1 domain is found at 96-328 (FPATAELAFF…TVDLLYGVVN (233 aa)).

The protein belongs to the binding-protein-dependent transport system permease family. OppBC subfamily.

It is found in the cell inner membrane. Part of the ABC transporter DppBCDF involved in dipeptide transport. Responsible for the translocation of the substrate across the membrane. The chain is Dipeptide transport system permease protein DppB (dppB) from Haemophilus influenzae (strain ATCC 51907 / DSM 11121 / KW20 / Rd).